A 114-amino-acid chain; its full sequence is Progonadoliberin-2 (114 aa).

Residues 1–24 form the signal peptide; it reads MASSRRGLLLLLMLLTAHPGPSEA. Gly34 is modified (glycine amide). The disordered stretch occupies residues 35–59; the sequence is GKRALSSAQDPQNALRPPAGSPAQA.

The protein belongs to the GnRH family.

Its subcellular location is the secreted. Functionally, stimulates the secretion of gonadotropins; it stimulates the secretion of both luteinizing and follicle-stimulating hormones. The chain is Progonadoliberin-2 (GNRH2) from Macaca mulatta (Rhesus macaque).